The primary structure comprises 282 residues: 4-hydroxybenzoate octaprenyltransferase (282 aa).

The next 9 helical transmembrane spans lie at 17–37, 40–60, 90–110, 113–133, 135–155, 163–183, 207–227, 231–251, and 262–282; these read IGIL…NQGF, IDLL…GCVI, AFIL…KLPI, FYFA…KRFF, APQL…FIAS, FIVL…MYAM, LIIA…AINK, CFFY…LKLI, and AFLV…LALI.

It belongs to the UbiA prenyltransferase family. Mg(2+) is required as a cofactor.

It is found in the cell inner membrane. It catalyses the reaction all-trans-octaprenyl diphosphate + 4-hydroxybenzoate = 4-hydroxy-3-(all-trans-octaprenyl)benzoate + diphosphate. It functions in the pathway cofactor biosynthesis; ubiquinone biosynthesis. In terms of biological role, catalyzes the prenylation of para-hydroxybenzoate (PHB) with an all-trans polyprenyl group. Mediates the second step in the final reaction sequence of ubiquinone-8 (UQ-8) biosynthesis, which is the condensation of the polyisoprenoid side chain with PHB, generating the first membrane-bound Q intermediate 3-octaprenyl-4-hydroxybenzoate. The chain is 4-hydroxybenzoate octaprenyltransferase from Legionella pneumophila (strain Lens).